A 305-amino-acid polypeptide reads, in one-letter code: Sulfate adenylyltransferase subunit 2 (305 aa).

This sequence belongs to the PAPS reductase family. CysD subfamily. As to quaternary structure, heterodimer composed of CysD, the smaller subunit, and CysN.

The enzyme catalyses sulfate + ATP + H(+) = adenosine 5'-phosphosulfate + diphosphate. Its pathway is sulfur metabolism; hydrogen sulfide biosynthesis; sulfite from sulfate: step 1/3. Functionally, with CysN forms the ATP sulfurylase (ATPS) that catalyzes the adenylation of sulfate producing adenosine 5'-phosphosulfate (APS) and diphosphate, the first enzymatic step in sulfur assimilation pathway. APS synthesis involves the formation of a high-energy phosphoric-sulfuric acid anhydride bond driven by GTP hydrolysis by CysN coupled to ATP hydrolysis by CysD. The chain is Sulfate adenylyltransferase subunit 2 from Stutzerimonas stutzeri (strain A1501) (Pseudomonas stutzeri).